The following is a 456-amino-acid chain: Argininosuccinate lyase (456 aa).

This sequence belongs to the lyase 1 family. Argininosuccinate lyase subfamily.

The protein localises to the cytoplasm. The enzyme catalyses 2-(N(omega)-L-arginino)succinate = fumarate + L-arginine. The protein operates within amino-acid biosynthesis; L-arginine biosynthesis; L-arginine from L-ornithine and carbamoyl phosphate: step 3/3. The sequence is that of Argininosuccinate lyase from Listeria innocua serovar 6a (strain ATCC BAA-680 / CLIP 11262).